Reading from the N-terminus, the 500-residue chain is Protein-tyrosine sulfotransferase (500 aa).

Residues 1–24 (MQMNSVWKLSLGLLLLSSVIGSFA) form the signal peptide. Over 25–467 (ELDFGHCETL…SVLGEMGEEK (443 aa)) the chain is Lumenal. Catalysis depends on residues R121 and E142. 6 N-linked (GlcNAc...) asparagine glycosylation sites follow: N156, N248, N315, N343, N359, and N395. A helical membrane pass occupies residues 468–488 (LWKFVPVALMLLLIVLFFLFV). The Cytoplasmic segment spans residues 489–500 (NAKRRRTSKVKI).

As to expression, expressed throughout the plant body, highest levels of expression are in the root apical meristem.

The protein localises to the golgi apparatus membrane. It carries out the reaction L-tyrosyl-[protein] + 3'-phosphoadenylyl sulfate = O-sulfo-L-tyrosine-[protein] + adenosine 3',5'-bisphosphate + H(+). Functionally, catalyzes the O-sulfation of tyrosine residues within acidic motifs of polypeptides. The sequence is that of Protein-tyrosine sulfotransferase (TPST) from Arabidopsis thaliana (Mouse-ear cress).